The primary structure comprises 164 residues: Interferon gamma (164 aa).

An N-terminal signal peptide occupies residues 1 to 19 (MTCQTYNLFVLSVIMIYYG). N-linked (GlcNAc...) asparagine glycosylation is found at Asn42 and Asn61.

The protein belongs to the type II (or gamma) interferon family. In terms of assembly, homodimer.

It is found in the secreted. Its function is as follows. Produced by lymphocytes activated by specific antigens or mitogens. IFN-gamma, in addition to having antiviral activity, has important immunoregulatory functions. It is a potent activator of macrophages, it has antiproliferative effects on transformed cells and it can potentiate the antiviral and antitumor effects of the type I interferons. The sequence is that of Interferon gamma (IFNG) from Meleagris gallopavo (Wild turkey).